Here is a 130-residue protein sequence, read N- to C-terminus: NADH-quinone oxidoreductase subunit A (130 aa).

The next 3 membrane-spanning stretches (helical) occupy residues 15–35, 67–87, and 95–115; these read AIHV…ATII, FLIA…FAWA, and WVGL…LIYL.

It belongs to the complex I subunit 3 family. As to quaternary structure, NDH-1 is composed of 14 different subunits. Subunits NuoA, H, J, K, L, M, N constitute the membrane sector of the complex.

It is found in the cell inner membrane. It catalyses the reaction a quinone + NADH + 5 H(+)(in) = a quinol + NAD(+) + 4 H(+)(out). NDH-1 shuttles electrons from NADH, via FMN and iron-sulfur (Fe-S) centers, to quinones in the respiratory chain. The immediate electron acceptor for the enzyme in this species is believed to be ubiquinone. Couples the redox reaction to proton translocation (for every two electrons transferred, four hydrogen ions are translocated across the cytoplasmic membrane), and thus conserves the redox energy in a proton gradient. The sequence is that of NADH-quinone oxidoreductase subunit A from Rhodopseudomonas palustris (strain BisA53).